We begin with the raw amino-acid sequence, 121 residues long: Large ribosomal subunit protein uL22c (121 aa).

It belongs to the universal ribosomal protein uL22 family. In terms of assembly, part of the 50S ribosomal subunit.

It is found in the plastid. The protein resides in the chloroplast. Its function is as follows. This protein binds specifically to 23S rRNA. The globular domain of the protein is located near the polypeptide exit tunnel on the outside of the subunit, while an extended beta-hairpin is found that lines the wall of the exit tunnel in the center of the 70S ribosome. This is Large ribosomal subunit protein uL22c (rpl22) from Lemna minor (Common duckweed).